Consider the following 621-residue polypeptide: Type 2 DNA topoisomerase 6 subunit B (621 aa).

ATP contacts are provided by residues Asn-48, Asp-80, Ser-101 to Arg-102, Gly-111 to Ser-118, and Lys-435.

Belongs to the TOP6B family. In terms of assembly, homodimer. Heterotetramer of two Top6A and two Top6B chains.

The catalysed reaction is ATP-dependent breakage, passage and rejoining of double-stranded DNA.. Relaxes both positive and negative superturns and exhibits a strong decatenase activity. This Methanosarcina acetivorans (strain ATCC 35395 / DSM 2834 / JCM 12185 / C2A) protein is Type 2 DNA topoisomerase 6 subunit B.